The sequence spans 358 residues: 4-hydroxy-3-methylbut-2-en-1-yl diphosphate synthase (flavodoxin) (358 aa).

Residues Cys265, Cys268, Cys300, and Glu307 each coordinate [4Fe-4S] cluster.

Belongs to the IspG family. [4Fe-4S] cluster is required as a cofactor.

It catalyses the reaction (2E)-4-hydroxy-3-methylbut-2-enyl diphosphate + oxidized [flavodoxin] + H2O + 2 H(+) = 2-C-methyl-D-erythritol 2,4-cyclic diphosphate + reduced [flavodoxin]. It functions in the pathway isoprenoid biosynthesis; isopentenyl diphosphate biosynthesis via DXP pathway; isopentenyl diphosphate from 1-deoxy-D-xylulose 5-phosphate: step 5/6. In terms of biological role, converts 2C-methyl-D-erythritol 2,4-cyclodiphosphate (ME-2,4cPP) into 1-hydroxy-2-methyl-2-(E)-butenyl 4-diphosphate. This chain is 4-hydroxy-3-methylbut-2-en-1-yl diphosphate synthase (flavodoxin), found in Maridesulfovibrio salexigens (strain ATCC 14822 / DSM 2638 / NCIMB 8403 / VKM B-1763) (Desulfovibrio salexigens).